A 441-amino-acid polypeptide reads, in one-letter code: Actin-related protein 4 (441 aa).

The interval 48-73 is disordered; that stretch reads VDVDSTKTNSNSEDSKTESEKEKSKR. A compositionally biased stretch (basic and acidic residues) spans 60-70; it reads EDSKTESEKEK.

Belongs to the actin family. ARP4 subfamily. As to quaternary structure, component of the SWR1 chromatin-remodeling complex and of the NuA4 histone acetyltransferase complex. Interacts with the SWI/SNF complex. Interacts with EAF1A and EAF1B. As to expression, mostly expressed in flowers, and, to a lower extent, in roots, seedlings, leaves and siliques (at protein level).

It is found in the nucleus. The protein resides in the cytoplasm. In terms of biological role, involved in several developmental processes including organization of plant organs, flowering time, anther development, flower senescence and fertility, probably by regulating the chromatin structure. The chain is Actin-related protein 4 from Arabidopsis thaliana (Mouse-ear cress).